The primary structure comprises 158 residues: Phospholipase A2 AP-PLA2-II (158 aa).

An N-terminal signal peptide occupies residues 1 to 16 (MKTFLILAMAVALAKA). Residues 17 to 23 (QSTDEIT) constitute a propeptide that is removed on maturation. Intrachain disulfides connect C51–C158, C53–C69, C68–C138, C75–C131, C85–C124, and C109–C129. The Ca(2+) site is built by G54 and G56. The active site involves H72. D73 serves as a coordination point for Ca(2+). The active site involves D132.

Belongs to the phospholipase A2 family. Group I subfamily. In terms of assembly, monomer. Ca(2+) is required as a cofactor. In terms of tissue distribution, expressed by the venom gland.

The protein resides in the secreted. The catalysed reaction is a 1,2-diacyl-sn-glycero-3-phosphocholine + H2O = a 1-acyl-sn-glycero-3-phosphocholine + a fatty acid + H(+). Functionally, starfish phospholipase A2 (PLA2) that has hemorrhagic and capillary permeability-increasing activities and hence is considered to be deeply involved in the local inflammation. Shows hemolytic activity only in the presence of phosphatidylcholine (PC). PLA2 catalyzes the calcium-dependent hydrolysis of the 2-acyl groups in 3-sn-phosphoglycerides. The polypeptide is Phospholipase A2 AP-PLA2-II (Acanthaster planci (Crown-of-thorns starfish)).